A 21-amino-acid polypeptide reads, in one-letter code: MGIIAGIIKFIKGLIEKFTGK.

The protein belongs to the phenol-soluble modulin alpha peptides family.

Functionally, peptide which can recruit, activate and subsequently lyse human neutrophils, thus eliminating the main cellular defense against infection. This Staphylococcus aureus (strain USA300 / TCH1516) protein is Phenol-soluble modulin alpha 2 peptide (psmA2).